We begin with the raw amino-acid sequence, 156 residues long: Deoxyuridine 5'-triphosphate nucleotidohydrolase (156 aa).

Substrate contacts are provided by residues 76–78, N89, 93–95, and K103; these read RSG and TVD.

Belongs to the dUTPase family. Mg(2+) is required as a cofactor.

The enzyme catalyses dUTP + H2O = dUMP + diphosphate + H(+). It participates in pyrimidine metabolism; dUMP biosynthesis; dUMP from dCTP (dUTP route): step 2/2. Its function is as follows. This enzyme is involved in nucleotide metabolism: it produces dUMP, the immediate precursor of thymidine nucleotides and it decreases the intracellular concentration of dUTP so that uracil cannot be incorporated into DNA. This chain is Deoxyuridine 5'-triphosphate nucleotidohydrolase, found in Rhizobium johnstonii (strain DSM 114642 / LMG 32736 / 3841) (Rhizobium leguminosarum bv. viciae).